Consider the following 173-residue polypeptide: Trafficking regulator of GLUT4 1 (173 aa).

Positions 1 to 10 (MANPAQPPLQ) are enriched in pro residues. The tract at residues 1 to 20 (MANPAQPPLQDPGSTSPLEL) is disordered. The Cytoplasmic portion of the chain corresponds to 1 to 102 (MANPAQPPLQ…QDQEAPKDYL (102 aa)). A phosphoserine mark is found at S16, S43, S45, S70, S84, and S85. The segment at residues 103–123 (VLAIASCFCPVWPLNLIPLIF) is an intramembrane region (helical). Residues 124-150 (SIMSRSSVQQGDLDGARRLGRLARLLS) lie on the Cytoplasmic side of the membrane. Residues 151–171 (ITFIILGIVIIIVAVTVNFTV) form a helical membrane-spanning segment. Residues 172-173 (PK) lie on the Extracellular side of the membrane.

The protein belongs to the CD225/Dispanin family. Interacts with SLC2A4; the interaction is required for proper SLC2A4 reacycling after insulin stimulation. Expressed specifically in white and brown adipose tissues.

The protein resides in the cell membrane. It localises to the endomembrane system. It is found in the cytoplasm. Its subcellular location is the perinuclear region. Its function is as follows. Regulates insulin-mediated adipose tissue glucose uptake and transport by modulation of SLC2A4 recycling. Not required for SLC2A4 membrane fusion upon an initial stimulus, but rather is necessary for proper protein recycling during prolonged insulin stimulation. This is Trafficking regulator of GLUT4 1 (Trarg1) from Mus musculus (Mouse).